The sequence spans 353 residues: Anthranilate phosphoribosyltransferase (353 aa).

Residues Gly87, 90-91 (GD), Thr95, 97-100 (NIST), 115-123 (KHGNRAASS), and Thr127 contribute to the 5-phospho-alpha-D-ribose 1-diphosphate site. Gly87 is a binding site for anthranilate. Ser99 contacts Mg(2+). Residue Asn118 participates in anthranilate binding. Arg173 serves as a coordination point for anthranilate. Mg(2+) is bound by residues Asp231 and Glu232.

Belongs to the anthranilate phosphoribosyltransferase family. As to quaternary structure, homodimer. It depends on Mg(2+) as a cofactor.

It carries out the reaction N-(5-phospho-beta-D-ribosyl)anthranilate + diphosphate = 5-phospho-alpha-D-ribose 1-diphosphate + anthranilate. Its pathway is amino-acid biosynthesis; L-tryptophan biosynthesis; L-tryptophan from chorismate: step 2/5. In terms of biological role, catalyzes the transfer of the phosphoribosyl group of 5-phosphorylribose-1-pyrophosphate (PRPP) to anthranilate to yield N-(5'-phosphoribosyl)-anthranilate (PRA). This Salinispora arenicola (strain CNS-205) protein is Anthranilate phosphoribosyltransferase.